Consider the following 130-residue polypeptide: Large ribosomal subunit protein bL20 (130 aa).

This sequence belongs to the bacterial ribosomal protein bL20 family.

Binds directly to 23S ribosomal RNA and is necessary for the in vitro assembly process of the 50S ribosomal subunit. It is not involved in the protein synthesizing functions of that subunit. The sequence is that of Large ribosomal subunit protein bL20 from Solibacter usitatus (strain Ellin6076).